Reading from the N-terminus, the 138-residue chain is Centromere protein S (138 aa).

Met-1 carries the post-translational modification N-acetylmethionine. Positions 112-138 (AKKKKKLEDENRNSVESAEAGVEESEN) are disordered.

It belongs to the TAF9 family. CENP-S/MHF1 subfamily. As to quaternary structure, heterodimer with CENPX, sometimes called MHF; this interaction stabilizes both partners. MHF heterodimers can assemble to form tetrameric structures. MHF also coassemble with CENPT-CENPW heterodimers at centromeres to form the tetrameric CENP-T-W-S-X complex. Forms a discrete complex with FANCM and CENPX, called FANCM-MHF; this interaction, probably mediated by direct binding between CENPS and FANCM, leads to synergistic activation of double-stranded DNA binding and strongly stimulates FANCM-mediated DNA remodeling. Recruited by FANCM to the Fanconi anemia (FA) core complex, which consists of CENPS, CENPX, FANCA, FANCB, FANCC, FANCE, FANCF, FANCG, FANCL, FANCM, FAAP24 and FAAP100. The FA core complex associates with Bloom syndrome (BLM) complex, which consists of at least BLM, DNA topoisomerase 3-alpha (TOP3A), RMI1/BLAP75, RPA1/RPA70 and RPA2/RPA32. The super complex between FA and BLM is called BRAFT. Component of the CENPA-CAD complex, composed of CENPI, CENPK, CENPL, CENPO, CENPP, CENPQ, CENPR and CENPS. The CENPA-CAD complex is probably recruited on centromeres by the CENPA-NAC complex, at least composed of CENPA, CENPC, CENPH, CENPM, CENPN, CENPT and CENPU.

Its subcellular location is the nucleus. It localises to the chromosome. The protein localises to the centromere. The protein resides in the kinetochore. Its function is as follows. DNA-binding component of the Fanconi anemia (FA) core complex. Required for the normal activation of the FA pathway, leading to monoubiquitination of the FANCI-FANCD2 complex in response to DNA damage, cellular resistance to DNA cross-linking drugs, and prevention of chromosomal breakage. In complex with CENPX (MHF heterodimer), crucial cofactor for FANCM in both binding and ATP-dependent remodeling of DNA. Stabilizes FANCM. In complex with CENPX and FANCM (but not other FANC proteins), rapidly recruited to blocked forks and promotes gene conversion at blocked replication forks. In complex with CENPT, CENPW and CENPX (CENP-T-W-S-X heterotetramer), involved in the formation of a functional kinetochore outer plate, which is essential for kinetochore-microtubule attachment and faithful mitotic progression. As a component of MHF and CENP-T-W-S-X complexes, binds DNA and bends it to form a nucleosome-like structure. DNA-binding function is fulfilled in the presence of CENPX, with the following preference for DNA substates: Holliday junction &gt; double-stranded &gt; splay arm &gt; single-stranded. Does not bind DNA on its own. This is Centromere protein S (CENPS) from Bos taurus (Bovine).